Reading from the N-terminus, the 237-residue chain is Uridylate kinase (237 aa).

Residue lysine 11–glycine 14 participates in ATP binding. Residue glycine 53 coordinates UMP. 2 residues coordinate ATP: glycine 54 and arginine 58. UMP contacts are provided by residues aspartate 73 and threonine 134–threonine 141. ATP contacts are provided by threonine 161, tyrosine 167, and aspartate 170.

It belongs to the UMP kinase family. In terms of assembly, homohexamer.

It is found in the cytoplasm. It catalyses the reaction UMP + ATP = UDP + ADP. It participates in pyrimidine metabolism; CTP biosynthesis via de novo pathway; UDP from UMP (UMPK route): step 1/1. With respect to regulation, inhibited by UTP. Functionally, catalyzes the reversible phosphorylation of UMP to UDP. This is Uridylate kinase from Paraburkholderia xenovorans (strain LB400).